Reading from the N-terminus, the 577-residue chain is MAELLPGYSPSFKKPSEILRLSRRRSRSEASKAGVSPFSPGDVTKRVPGLRPFSPGPNKGAGVKRRNPFANLENTVCSPVKRRAESVPECASPEPRALVAARPSCWELGSPSPQPPQFNSVEDVIWGDPLADPLVKTESPEKPATACETPKGSVTFPADWSLKTRLLFTSSQSFSWADHLKAQEEAQGLVMHCRATAVSLPHSIQEPKLSTELRCAFQQSLVHWVHPSFPWVQLFPRIGIDRKMVGKNSPWSHDESLQQVIMSEWALSFTSLYNLLKAKLCPYFYVCTYQFTVLFRAAGLAGSDVITAVMSPTTRGLREAMKNEGITFTQPLVEEDPSKKQKNSEANSQGDITPKKENGNTETDEVSDESDEDESFSWLEEMGVEDKIKKPDSISIKLRKEKNEVKLDHKPESVVLVKGTNTFTLLNFLINCKSIVAAAGPQAGLPPTLLSPVAFRGATMQTLKARSVNVKTQVRSGYKDQFSLEITGPIMPHSLHSLTMLLQSAQRGSFSAGFYSHDPTAVFNTPIHPQAAKEISADLQNCGLHPSTVEQLSQVNQLGKLSLRHLELSDYRYTWKS.

Disordered stretches follow at residues 1 to 67 (MAEL…KRRN) and 328 to 382 (FTQP…LEEM). Residues 362-375 (ETDEVSDESDEDES) are compositionally biased toward acidic residues.

Belongs to the DONSON family. Component of the replisome complex.

The protein resides in the nucleus. Its function is as follows. Replisome component that maintains genome stability by protecting stalled or damaged replication forks. After the induction of replication stress, required for the stabilization of stalled replication forks, the efficient activation of the intra-S-phase and G/2M cell-cycle checkpoints and the maintenance of genome stability. The chain is Protein downstream neighbor of son homolog from Xenopus tropicalis (Western clawed frog).